The following is a 497-amino-acid chain: Sperm motility kinase Z (497 aa).

In terms of domain architecture, Protein kinase spans 28-275; sequence YTVLKTLSQH…AQDLLSHPWL (248 aa). Residues 34–42 and K57 contribute to the ATP site; that span reads LSQHGTTEV. Residue D146 is the Proton acceptor of the active site. The UBA domain occupies 292–332; the sequence is FPDPDIMAAMKNIGFHVQDIRESLKHRKFDETMATYNLLRA. 2 disordered regions span residues 383–410 and 439–460; these read TEEH…GRSQ and SSQA…SCPL.

This sequence belongs to the protein kinase superfamily. CAMK Ser/Thr protein kinase family. Smok subfamily.

The catalysed reaction is L-seryl-[protein] + ATP = O-phospho-L-seryl-[protein] + ADP + H(+). The enzyme catalyses L-threonyl-[protein] + ATP = O-phospho-L-threonyl-[protein] + ADP + H(+). In terms of biological role, may play a role in sperm motility, especially in the regulation of flagellar function. The sequence is that of Sperm motility kinase Z (Gm4922) from Mus musculus (Mouse).